The primary structure comprises 576 residues: Proline--tRNA ligase (576 aa).

The protein belongs to the class-II aminoacyl-tRNA synthetase family. ProS type 1 subfamily. Homodimer.

The protein resides in the cytoplasm. The catalysed reaction is tRNA(Pro) + L-proline + ATP = L-prolyl-tRNA(Pro) + AMP + diphosphate. Catalyzes the attachment of proline to tRNA(Pro) in a two-step reaction: proline is first activated by ATP to form Pro-AMP and then transferred to the acceptor end of tRNA(Pro). As ProRS can inadvertently accommodate and process non-cognate amino acids such as alanine and cysteine, to avoid such errors it has two additional distinct editing activities against alanine. One activity is designated as 'pretransfer' editing and involves the tRNA(Pro)-independent hydrolysis of activated Ala-AMP. The other activity is designated 'posttransfer' editing and involves deacylation of mischarged Ala-tRNA(Pro). The misacylated Cys-tRNA(Pro) is not edited by ProRS. This Trichlorobacter lovleyi (strain ATCC BAA-1151 / DSM 17278 / SZ) (Geobacter lovleyi) protein is Proline--tRNA ligase.